We begin with the raw amino-acid sequence, 60 residues long: uncharacterized protein (60 aa).

It to E.coli YjeQ and H.influenzae HI_1714.

This is an uncharacterized protein from Azotobacter vinelandii.